A 448-amino-acid polypeptide reads, in one-letter code: Gametocyte surface protein P45/48 (448 aa).

The first 27 residues, 1–27, serve as a signal peptide directing secretion; that stretch reads MMLYISAKKAQVAFILYIVLVLRIISG. In terms of domain architecture, 6-Cys 1 spans 45–182; it reads IGYKCNFSNE…AMVHVRVLKY (138 aa). Cystine bridges form between Cys49–Cys71 and Cys102–Cys156. N-linked (GlcNAc...) asparagine glycosylation is found at Asn50, Asn131, Asn190, Asn204, Asn254, Asn299, and Asn303. The 6-Cys 2 domain occupies 294 to 426; it reads VIHGCNFSSN…KSAYMTVTID (133 aa). 3 disulfide bridges follow: Cys298–Cys327, Cys344–Cys412, and Cys352–Cys410. The GPI-anchor amidated aspartate moiety is linked to residue Asp426. The propeptide at 427–448 is removed in mature form; sequence SAYYGFLAKTFIFLIVAILLYI.

In terms of assembly, heterodimer; heterodimerizes with PF230.

The protein localises to the cell surface. Its subcellular location is the cell membrane. Gametocyte surface protein required for male fertility. In Plasmodium falciparum (isolate 3D7), this protein is Gametocyte surface protein P45/48 (PF45/48).